The sequence spans 714 residues: MSKQTFTTTFAGKPLVVEVGQVAKQANGATVVRYGESTVLTAAVMSKKMSTGDFFPLQVNYEEKMYAAGKFPGGWMKREGRPSTDATLTARLIDRPIRPMFAEGFRNEVQVINTVLSYDEDASAPMAAMLGSSLALSISDIPFNGPIAGVQVAYVEGEFIINPDKAQQEASLLELTVAGTKDAINMVESGAKELPEAIMLEALLVGHKAIQELIAFQEEIVAAVGKEKAEVELLQVAADLQAEIIETYNADLQQAVQVEEKKAREAATEAVKEQVMAAYEERYAEDEEHDRIMRDVAEILEQMEHAEVRRLITEDKVRPDGRRVDEIRPLAAEIDFLPRVHGSGLFTRGQTQALSVLTLAPMGDTQIIDGLEPEYKKRFLHHYNFPQYSVGETGRYGAAGRREIGHGALGERALAQVLPSLEEFPYAIRLVAEVLESNGSSSQASICAGTLALMAGGVPIKAPVAGIAMGLISDGTNYTVLTDIQGLEDHFGDMDFKVAGTRQGITALQMDIKIEGITPQILEEALAQAKKARFEILDLIEATIAEPRPELAPTAPKIDTIKIDVDKIKVVIGKGGETIDKIIAETGVKIDIDEEGNVSIYSSDQDAINRAKEIIASLVREAKVGEVYHAKVVRIEKFGAFVNLFDKTDALVHISEIAWSRTANVSDVLEIGEEVDVKVIKVDDKGRIDASMKALVPRPPKPEKSEAKKEGKHD.

Mg(2+)-binding residues include D489 and D495. The KH domain maps to 556–615 (PKIDTIKIDVDKIKVVIGKGGETIDKIIAETGVKIDIDEEGNVSIYSSDQDAINRAKEII). The region spanning 625-693 (GEVYHAKVVR…DKGRIDASMK (69 aa)) is the S1 motif domain. The interval 691-714 (SMKALVPRPPKPEKSEAKKEGKHD) is disordered. A compositionally biased stretch (basic and acidic residues) spans 700–714 (PKPEKSEAKKEGKHD).

The protein belongs to the polyribonucleotide nucleotidyltransferase family. The cofactor is Mg(2+).

It localises to the cytoplasm. It carries out the reaction RNA(n+1) + phosphate = RNA(n) + a ribonucleoside 5'-diphosphate. Involved in mRNA degradation. Catalyzes the phosphorolysis of single-stranded polyribonucleotides processively in the 3'- to 5'-direction. This is Polyribonucleotide nucleotidyltransferase from Streptococcus equi subsp. zooepidemicus (strain H70).